Reading from the N-terminus, the 1246-residue chain is Stromal processing peptidase, chloroplastic (1246 aa).

The N-terminal 136 residues, M1–H136, are a transit peptide targeting the chloroplast. H228 lines the Zn(2+) pocket. E231 (proton acceptor) is an active-site residue. Position 232 (H232) interacts with Zn(2+). Residue E302 is part of the active site. Residue E309 participates in Zn(2+) binding.

It belongs to the peptidase M16 family. It depends on Zn(2+) as a cofactor.

The protein localises to the plastid. It localises to the chloroplast stroma. Functionally, cleaves presequences (transit peptides) from chloroplastic protein precursors. Initially recognizes a precursor by binding to the C-terminus of its transit peptide and then removes the transit peptide in a single endoproteolytic step. In a next step, pursues the cleavage of transit peptide to a subfragment form. In Oryza sativa subsp. japonica (Rice), this protein is Stromal processing peptidase, chloroplastic.